Consider the following 466-residue polypeptide: Cysteine--tRNA ligase (466 aa).

Cys-27 is a binding site for Zn(2+). Residues 29 to 39 (PTVYNYIHIGN) carry the 'HIGH' region motif. Residues Cys-207, His-232, and Glu-236 each coordinate Zn(2+). The short motif at 264 to 268 (KMSKS) is the 'KMSKS' region element. Lys-267 contributes to the ATP binding site.

The protein belongs to the class-I aminoacyl-tRNA synthetase family. Monomer. The cofactor is Zn(2+).

The protein resides in the cytoplasm. The catalysed reaction is tRNA(Cys) + L-cysteine + ATP = L-cysteinyl-tRNA(Cys) + AMP + diphosphate. This is Cysteine--tRNA ligase from Thermoanaerobacter pseudethanolicus (strain ATCC 33223 / 39E) (Clostridium thermohydrosulfuricum).